Here is a 366-residue protein sequence, read N- to C-terminus: Aminomethyltransferase (366 aa).

Belongs to the GcvT family. In terms of assembly, the glycine cleavage system is composed of four proteins: P, T, L and H.

The catalysed reaction is N(6)-[(R)-S(8)-aminomethyldihydrolipoyl]-L-lysyl-[protein] + (6S)-5,6,7,8-tetrahydrofolate = N(6)-[(R)-dihydrolipoyl]-L-lysyl-[protein] + (6R)-5,10-methylene-5,6,7,8-tetrahydrofolate + NH4(+). In terms of biological role, the glycine cleavage system catalyzes the degradation of glycine. The polypeptide is Aminomethyltransferase (Bacillus anthracis (strain A0248)).